A 681-amino-acid polypeptide reads, in one-letter code: 2-(S-pantetheinyl)-carbapenam-3-carboxylate methyltransferase (681 aa).

Residues 1 to 144 (MTVPAARSGR…IERLADHPDY (144 aa)) enclose the B12-binding domain. Residues asparagine 18, serine 72, tyrosine 74, valine 75, histidine 103, glycine 126, and glutamate 127 each coordinate cob(II)alamin. Positions 192-417 (RDLRFYALWE…RLYVEEPGTP (226 aa)) constitute a Radical SAM core domain. Residues cysteine 206 and cysteine 210 each coordinate [4Fe-4S] cluster. Position 212 (phenylalanine 212) interacts with 5'-deoxyadenosine. Cysteine 213 is a binding site for [4Fe-4S] cluster. Residues aspartate 214 and cysteine 249 each contribute to the cob(II)alamin site. 5'-deoxyadenosine is bound by residues glutamine 312, glutamate 349, and glycine 384.

This sequence belongs to the methyltransferase superfamily. It depends on [4Fe-4S] cluster as a cofactor. The cofactor is cob(II)alamin.

The catalysed reaction is (2R,3R,5S)-2-(S-pantetheinyl)-carbapenam-3-carboxylate + AH2 + 2 S-adenosyl-L-methionine = (2R,3R,5S,6R)-6-(methyl)-2-(S-pantetheinyl)-carbapenam-3-carboxylate + 5'-deoxyadenosine + L-methionine + A + S-adenosyl-L-homocysteine + 2 H(+). The enzyme catalyses (2R,3R,5S,6R)-6-(methyl)-2-(S-pantetheinyl)-carbapenam-3-carboxylate + AH2 + 2 S-adenosyl-L-methionine = (2R,3R,5S,6R)-6-(ethyl)-2-(S-pantetheinyl)-carbapenam-3-carboxylate + 5'-deoxyadenosine + L-methionine + A + S-adenosyl-L-homocysteine + 2 H(+). It participates in antibiotic biosynthesis. In terms of biological role, methyltransferase involved in the biosynthesis of the beta-lactam carbapenem antibiotic thienamycin. Catalyzes two consecutive S-adenosyl-L-methionine-dependent methylations to build out the C6-ethyl side chain in a stereocontrolled manner. In vitro can use methyl viologen and NADPH as the iron-sulfur cluster reductants. This chain is 2-(S-pantetheinyl)-carbapenam-3-carboxylate methyltransferase, found in Streptantibioticus cattleyicolor (strain ATCC 35852 / DSM 46488 / JCM 4925 / NBRC 14057 / NRRL 8057) (Streptomyces cattleya).